The chain runs to 466 residues: Tubulointerstitial nephritis antigen-like (466 aa).

Residues 1-21 (MWGCWLGLLLLLLAGQAALEA) form the signal peptide. Positions 49–96 (EQDMCCRGRADECALPYLGATCYCDLFCNRTVSDCCPDFWDFCLGIPP) constitute an SMB domain. 5 disulfides stabilise this stretch: Cys53-Cys72, Cys70-Cys72, Cys70-Cys84, Cys76-Cys83, and Cys84-Cys91. Asn77 is a glycosylation site (N-linked (GlcNAc...) asparagine). Residue Asn160 is glycosylated (N-linked (GlcNAc...) asparagine).

This sequence belongs to the peptidase C1 family. In terms of processing, glycosylated. In terms of tissue distribution, highly expressed in kidney, heart and adrenocortical cells of adrenal glands. Moderately expressed in spleen and liver. Also found in prostate, seminal vesicle, epididymis and testis in male reproductive organs. In adrenal glands is found in the outer cortical regions corresponding to the zona glomerulosa (zG) and the undifferentiated cell zone (zU) (at protein level).

It localises to the secreted. In terms of biological role, may be implicated in the adrenocortical zonation and in mechanisms for repressing the CYP11B1 gene expression in adrenocortical cells. This is a non catalytic peptidase C1 family protein. This Mus musculus (Mouse) protein is Tubulointerstitial nephritis antigen-like (Tinagl1).